The following is a 416-amino-acid chain: Serine hydroxymethyltransferase (416 aa).

Residues L118 and 122–124 each bind (6S)-5,6,7,8-tetrahydrofolate; that span reads GHL. N6-(pyridoxal phosphate)lysine is present on K226. E242 lines the (6S)-5,6,7,8-tetrahydrofolate pocket.

It belongs to the SHMT family. As to quaternary structure, homodimer. The cofactor is pyridoxal 5'-phosphate.

The protein resides in the cytoplasm. It carries out the reaction (6R)-5,10-methylene-5,6,7,8-tetrahydrofolate + glycine + H2O = (6S)-5,6,7,8-tetrahydrofolate + L-serine. It participates in one-carbon metabolism; tetrahydrofolate interconversion. It functions in the pathway amino-acid biosynthesis; glycine biosynthesis; glycine from L-serine: step 1/1. Catalyzes the reversible interconversion of serine and glycine with tetrahydrofolate (THF) serving as the one-carbon carrier. This reaction serves as the major source of one-carbon groups required for the biosynthesis of purines, thymidylate, methionine, and other important biomolecules. Also exhibits THF-independent aldolase activity toward beta-hydroxyamino acids, producing glycine and aldehydes, via a retro-aldol mechanism. This is Serine hydroxymethyltransferase from Helicobacter pylori (strain J99 / ATCC 700824) (Campylobacter pylori J99).